The chain runs to 356 residues: Heat-inducible transcription repressor HrcA (356 aa).

This sequence belongs to the HrcA family.

Its function is as follows. Negative regulator of class I heat shock genes (grpE-dnaK-dnaJ and groELS operons). Prevents heat-shock induction of these operons. The sequence is that of Heat-inducible transcription repressor HrcA from Chlorobaculum parvum (strain DSM 263 / NCIMB 8327) (Chlorobium vibrioforme subsp. thiosulfatophilum).